A 51-amino-acid chain; its full sequence is Gene 18 protein (51 aa).

The tract at residues 24–51 is disordered; sequence AAGGWKRPRKPRTTKPKPAPKQEPATEE. Positions 29 to 38 are enriched in basic residues; it reads KRPRKPRTTK.

The sequence is that of Gene 18 protein (18) from Mycobacterium phage D29 (Mycobacteriophage D29).